The primary structure comprises 109 residues: Protease inhibitor SIL-V2 (109 aa).

2 disulfide bridges follow: C30–C45 and C67–C97.

The protein belongs to the protease inhibitor I16 (SSI) family. Homodimer.

The protein resides in the secreted. The polypeptide is Protease inhibitor SIL-V2 (Streptomyces orinoci (Streptoverticillium orinoci)).